We begin with the raw amino-acid sequence, 925 residues long: Protein translocase subunit SecA (925 aa).

ATP-binding positions include Gln87, 105–109 (GEGKT), and Asp515. Positions 909, 911, 920, and 921 each coordinate Zn(2+).

The protein belongs to the SecA family. As to quaternary structure, monomer and homodimer. Part of the essential Sec protein translocation apparatus which comprises SecA, SecYEG and auxiliary proteins SecDF-YajC and YidC. The cofactor is Zn(2+).

The protein resides in the cell inner membrane. It localises to the cytoplasm. The catalysed reaction is ATP + H2O + cellular proteinSide 1 = ADP + phosphate + cellular proteinSide 2.. Part of the Sec protein translocase complex. Interacts with the SecYEG preprotein conducting channel. Has a central role in coupling the hydrolysis of ATP to the transfer of proteins into and across the cell membrane, serving both as a receptor for the preprotein-SecB complex and as an ATP-driven molecular motor driving the stepwise translocation of polypeptide chains across the membrane. The protein is Protein translocase subunit SecA of Cupriavidus necator (strain ATCC 17699 / DSM 428 / KCTC 22496 / NCIMB 10442 / H16 / Stanier 337) (Ralstonia eutropha).